Consider the following 445-residue polypeptide: 3-phosphoshikimate 1-carboxyvinyltransferase (445 aa).

Residues 1–25 form a disordered region; that stretch reads MTDSNQPMPLQARKSGALHGTARVP. Residues Lys28, Ser29, and Arg33 each coordinate 3-phosphoshikimate. Residue Lys28 coordinates phosphoenolpyruvate. Residues Gly101 and Arg129 each contribute to the phosphoenolpyruvate site. Ser175, Gln177, Asp328, and Lys355 together coordinate 3-phosphoshikimate. Gln177 contacts phosphoenolpyruvate. The active-site Proton acceptor is Asp328. 2 residues coordinate phosphoenolpyruvate: Arg359 and Arg402.

Belongs to the EPSP synthase family. In terms of assembly, monomer.

The protein resides in the cytoplasm. It catalyses the reaction 3-phosphoshikimate + phosphoenolpyruvate = 5-O-(1-carboxyvinyl)-3-phosphoshikimate + phosphate. Its pathway is metabolic intermediate biosynthesis; chorismate biosynthesis; chorismate from D-erythrose 4-phosphate and phosphoenolpyruvate: step 6/7. Functionally, catalyzes the transfer of the enolpyruvyl moiety of phosphoenolpyruvate (PEP) to the 5-hydroxyl of shikimate-3-phosphate (S3P) to produce enolpyruvyl shikimate-3-phosphate and inorganic phosphate. The sequence is that of 3-phosphoshikimate 1-carboxyvinyltransferase from Rhodopseudomonas palustris (strain ATCC BAA-98 / CGA009).